Here is a 263-residue protein sequence, read N- to C-terminus: Endonuclease NucS (263 aa).

This sequence belongs to the NucS endonuclease family.

Its subcellular location is the cytoplasm. Functionally, cleaves both 3' and 5' ssDNA extremities of branched DNA structures. The polypeptide is Endonuclease NucS (Methanocaldococcus jannaschii (strain ATCC 43067 / DSM 2661 / JAL-1 / JCM 10045 / NBRC 100440) (Methanococcus jannaschii)).